Here is a 109-residue protein sequence, read N- to C-terminus: U4-lycotoxin-Ls1a (109 aa).

An N-terminal signal peptide occupies residues 1 to 22; sequence MKVLVLFSVLFLTLFSYSSTEA. A propeptide spanning residues 23–44 is cleaved from the precursor; the sequence is IDEFDSDAEDDMLSLMANEQVR. A knottin domain region spans residues 45–88; sequence AKACTPRLHDCSHDRHSCCRGELFKDVCYCFYPEGEDKTEVCSC. 4 disulfides stabilise this stretch: cysteine 48/cysteine 63, cysteine 55/cysteine 72, cysteine 62/cysteine 88, and cysteine 74/cysteine 86. The segment at 89–108 is linear cationic cytotoxin domain; sequence QQPKSHKYIEKVVDKAKTVV.

This sequence belongs to the neurotoxin 19 (CSTX) family. 05 (U4-Lctx) subfamily. Expressed by the venom gland.

The protein localises to the secreted. Functionally, enhances the high-affinity desensitization of human P2RX3 purinoceptors. This is U4-lycotoxin-Ls1a from Lycosa singoriensis (Wolf spider).